The chain runs to 565 residues: NAD-dependent malic enzyme (565 aa).

Tyrosine 104 serves as the catalytic Proton donor. NAD(+) is bound at residue arginine 157. Lysine 175 (proton acceptor) is an active-site residue. 3 residues coordinate a divalent metal cation: glutamate 246, aspartate 247, and aspartate 270. 2 residues coordinate NAD(+): aspartate 270 and asparagine 418.

It belongs to the malic enzymes family. Homotetramer. Requires Mg(2+) as cofactor. Mn(2+) is required as a cofactor.

It carries out the reaction (S)-malate + NAD(+) = pyruvate + CO2 + NADH. The enzyme catalyses oxaloacetate + H(+) = pyruvate + CO2. The protein is NAD-dependent malic enzyme of Klebsiella pneumoniae (strain 342).